The sequence spans 396 residues: Tryptophan synthase beta chain (396 aa).

Lys86 carries the post-translational modification N6-(pyridoxal phosphate)lysine.

This sequence belongs to the TrpB family. Tetramer of two alpha and two beta chains. Pyridoxal 5'-phosphate serves as cofactor.

It catalyses the reaction (1S,2R)-1-C-(indol-3-yl)glycerol 3-phosphate + L-serine = D-glyceraldehyde 3-phosphate + L-tryptophan + H2O. It participates in amino-acid biosynthesis; L-tryptophan biosynthesis; L-tryptophan from chorismate: step 5/5. The beta subunit is responsible for the synthesis of L-tryptophan from indole and L-serine. This chain is Tryptophan synthase beta chain, found in Blochmanniella pennsylvanica (strain BPEN).